The following is a 180-amino-acid chain: O-acetyl-ADP-ribose deacetylase (180 aa).

Positions 1 to 175 (MKPQIDVIHG…LYQRLLTQRG (175 aa)) constitute a Macro domain. Substrate is bound by residues 11 to 12 (DI), asparagine 25, 33 to 35 (GVD), and 122 to 126 (STGVY). Aspartate 35 functions as the Proton acceptor in the catalytic mechanism.

The protein belongs to the MacroD-type family. YmdB subfamily. In terms of assembly, homodimer. Interacts with RNase III.

It catalyses the reaction 3''-O-acetyl-ADP-D-ribose + H2O = ADP-D-ribose + acetate + H(+). The catalysed reaction is 2''-O-acetyl-ADP-D-ribose + H2O = ADP-D-ribose + acetate + H(+). Functionally, deacetylates O-acetyl-ADP ribose to yield ADP-ribose and free acetate. Down-regulates ribonuclease 3 (RNase III) activity. Acts by interacting directly with the region of the ribonuclease that is required for dimerization/activation. The polypeptide is O-acetyl-ADP-ribose deacetylase (Enterobacter cloacae subsp. cloacae (strain ATCC 13047 / DSM 30054 / NBRC 13535 / NCTC 10005 / WDCM 00083 / NCDC 279-56)).